A 593-amino-acid chain; its full sequence is ATP-dependent lipid A-core flippase (593 aa).

Helical transmembrane passes span 33 to 55, 67 to 87, 146 to 166, 169 to 189, 258 to 278, and 284 to 304; these read YIFL…YGFG, ILML…VGSF, AIIT…VMFV, WQLS…ISII, VIQI…AIFG, and GSSW…AAIL. Residues 38-319 enclose the ABC transmembrane type-1 domain; it reads ADASMIYLIN…LTKVNVVIQK (282 aa). An ABC transporter domain is found at 351 to 585; the sequence is VTIKDLSFAF…GGLYTGSINR (235 aa). 383 to 390 lines the ATP pocket; it reads GKSGSGKT.

This sequence belongs to the ABC transporter superfamily. Lipid exporter (TC 3.A.1.106) family. Homodimer.

It localises to the cell membrane. The enzyme catalyses ATP + H2O + lipid A-core oligosaccharideSide 1 = ADP + phosphate + lipid A-core oligosaccharideSide 2.. In terms of biological role, involved in lipopolysaccharide (LPS) biosynthesis. Translocates lipid A-core from the inner to the outer leaflet of the inner membrane. Transmembrane domains (TMD) form a pore in the inner membrane and the ATP-binding domain (NBD) is responsible for energy generation. This chain is ATP-dependent lipid A-core flippase, found in Francisella novicida.